We begin with the raw amino-acid sequence, 134 residues long: D-ribose pyranase (134 aa).

Catalysis depends on histidine 20, which acts as the Proton donor. Residues aspartate 28, histidine 101, and 123-125 each bind substrate; that span reads YCN.

Belongs to the RbsD / FucU family. RbsD subfamily. In terms of assembly, homodecamer.

It localises to the cytoplasm. The catalysed reaction is beta-D-ribopyranose = beta-D-ribofuranose. The protein operates within carbohydrate metabolism; D-ribose degradation; D-ribose 5-phosphate from beta-D-ribopyranose: step 1/2. Catalyzes the interconversion of beta-pyran and beta-furan forms of D-ribose. This Pseudomonas fluorescens (strain SBW25) protein is D-ribose pyranase.